Here is a 233-residue protein sequence, read N- to C-terminus: Large ribosomal subunit protein uL1 (233 aa).

The protein belongs to the universal ribosomal protein uL1 family. Part of the 50S ribosomal subunit.

Its function is as follows. Binds directly to 23S rRNA. The L1 stalk is quite mobile in the ribosome, and is involved in E site tRNA release. In terms of biological role, protein L1 is also a translational repressor protein, it controls the translation of the L11 operon by binding to its mRNA. The sequence is that of Large ribosomal subunit protein uL1 from Geobacillus thermodenitrificans (strain NG80-2).